An 834-amino-acid chain; its full sequence is Probable phosphoenolpyruvate synthase (834 aa).

The active-site Tele-phosphohistidine intermediate is His447. Substrate is bound by residues Arg550, Arg598, Glu699, Gly720, Ser721, Asn722, and Asp723. Residue Glu699 participates in Mg(2+) binding. Asp723 lines the Mg(2+) pocket. Cys772 (proton donor) is an active-site residue.

The protein belongs to the PEP-utilizing enzyme family. In terms of assembly, homooligomer. Forms a large complex of about 2000 kDa. The cofactor is Mg(2+). In terms of processing, the N-terminus is blocked.

The catalysed reaction is pyruvate + ATP + H2O = phosphoenolpyruvate + AMP + phosphate + 2 H(+). It participates in carbohydrate biosynthesis; gluconeogenesis. Catalyzes the phosphorylation of pyruvate to phosphoenolpyruvate. The polypeptide is Probable phosphoenolpyruvate synthase (ppsA) (Staphylothermus marinus (strain ATCC 43588 / DSM 3639 / JCM 9404 / F1)).